A 418-amino-acid polypeptide reads, in one-letter code: 3-phosphoshikimate 1-carboxyvinyltransferase (418 aa).

The 3-phosphoshikimate site is built by Lys-26, Ser-27, and Arg-31. Lys-26 serves as a coordination point for phosphoenolpyruvate. Gly-97 and Arg-125 together coordinate phosphoenolpyruvate. Residues Ser-170, Ser-171, Gln-172, Asp-297, Asn-320, and Lys-324 each coordinate 3-phosphoshikimate. A phosphoenolpyruvate-binding site is contributed by Gln-172. Asp-297 acts as the Proton acceptor in catalysis. Residues Arg-328, Arg-375, and Lys-400 each contribute to the phosphoenolpyruvate site.

The protein belongs to the EPSP synthase family. Monomer.

It localises to the cytoplasm. The catalysed reaction is 3-phosphoshikimate + phosphoenolpyruvate = 5-O-(1-carboxyvinyl)-3-phosphoshikimate + phosphate. It participates in metabolic intermediate biosynthesis; chorismate biosynthesis; chorismate from D-erythrose 4-phosphate and phosphoenolpyruvate: step 6/7. Functionally, catalyzes the transfer of the enolpyruvyl moiety of phosphoenolpyruvate (PEP) to the 5-hydroxyl of shikimate-3-phosphate (S3P) to produce enolpyruvyl shikimate-3-phosphate and inorganic phosphate. The chain is 3-phosphoshikimate 1-carboxyvinyltransferase from Pseudomonas syringae pv. tomato (strain ATCC BAA-871 / DC3000).